The sequence spans 106 residues: L-rhamnose mutarotase (106 aa).

Tyr20 is a substrate binding site. The Proton donor role is filled by His24. Substrate-binding positions include Tyr43 and 78–79 (WW).

This sequence belongs to the rhamnose mutarotase family. Homodimer.

The protein localises to the cytoplasm. The catalysed reaction is alpha-L-rhamnose = beta-L-rhamnose. Its pathway is carbohydrate metabolism; L-rhamnose metabolism. Involved in the anomeric conversion of L-rhamnose. The polypeptide is L-rhamnose mutarotase (Rhizobium johnstonii (strain DSM 114642 / LMG 32736 / 3841) (Rhizobium leguminosarum bv. viciae)).